A 231-amino-acid polypeptide reads, in one-letter code: ATP phosphoribosyltransferase (231 aa).

Belongs to the ATP phosphoribosyltransferase family. Short subfamily. Heteromultimer composed of HisG and HisZ subunits.

Its subcellular location is the cytoplasm. It carries out the reaction 1-(5-phospho-beta-D-ribosyl)-ATP + diphosphate = 5-phospho-alpha-D-ribose 1-diphosphate + ATP. Its pathway is amino-acid biosynthesis; L-histidine biosynthesis; L-histidine from 5-phospho-alpha-D-ribose 1-diphosphate: step 1/9. Its function is as follows. Catalyzes the condensation of ATP and 5-phosphoribose 1-diphosphate to form N'-(5'-phosphoribosyl)-ATP (PR-ATP). Has a crucial role in the pathway because the rate of histidine biosynthesis seems to be controlled primarily by regulation of HisG enzymatic activity. The polypeptide is ATP phosphoribosyltransferase (hisG) (Rhizobium etli (strain ATCC 51251 / DSM 11541 / JCM 21823 / NBRC 15573 / CFN 42)).